The chain runs to 51 residues: Large ribosomal subunit protein eL39z/eL39x (51 aa).

The disordered stretch occupies residues Met-1–Arg-21. Residues Phe-7–Gln-19 are compositionally biased toward basic residues.

The protein belongs to the eukaryotic ribosomal protein eL39 family.

In Arabidopsis thaliana (Mouse-ear cress), this protein is Large ribosomal subunit protein eL39z/eL39x (RPL39A).